A 65-amino-acid chain; its full sequence is Neurotoxin BmK AGAP-SYPU2 (65 aa).

The LCN-type CS-alpha/beta domain occupies 2–64; sequence KDGYIVDDKN…VPIRVPGRCN (63 aa). Cystine bridges form between Cys12–Cys63, Cys16–Cys36, Cys22–Cys46, and Cys26–Cys48.

As to expression, expressed by the venom gland.

The protein localises to the secreted. Its function is as follows. Alpha toxins bind voltage-independently at site-3 of sodium channels and inhibit the inactivation of the activated channels, thereby blocking neuronal transmission. In vivo, shows analgesic activity (ED(50) is 1.42 mg/kg) and antitumor activity against Ehrlich ascites tumor and S-180 fibrosarcoma models. The polypeptide is Neurotoxin BmK AGAP-SYPU2 (Olivierus martensii (Manchurian scorpion)).